A 307-amino-acid chain; its full sequence is O-acetylserine dependent cystathionine beta-synthase (307 aa).

Lysine 44 carries the N6-(pyridoxal phosphate)lysine modification. Residues asparagine 74, 178-182, and serine 265 each bind pyridoxal 5'-phosphate; that span reads GSGGT.

This sequence belongs to the cysteine synthase/cystathionine beta-synthase family. It depends on pyridoxal 5'-phosphate as a cofactor.

It catalyses the reaction O-acetyl-L-serine + L-homocysteine = L,L-cystathionine + acetate + H(+). Catalyzes the conversion of O-acetylserine and homocysteine to cystathionine. This is O-acetylserine dependent cystathionine beta-synthase (mccA) from Bacillus subtilis (strain 168).